The following is a 295-amino-acid chain: Acetaldehyde dehydrogenase (295 aa).

11 to 14 (SGNI) contributes to the NAD(+) binding site. C127 (acyl-thioester intermediate) is an active-site residue. NAD(+)-binding positions include 158 to 166 (SAGPGTRAN) and N270.

Belongs to the acetaldehyde dehydrogenase family.

It carries out the reaction acetaldehyde + NAD(+) + CoA = acetyl-CoA + NADH + H(+). This Geobacillus thermodenitrificans (strain NG80-2) protein is Acetaldehyde dehydrogenase (nbaJ).